We begin with the raw amino-acid sequence, 689 residues long: Pyocin-S2 (689 aa).

3 residues coordinate Zn(2+): H656, H681, and H685.

The protein belongs to the colicin/pyosin nuclease family. Purified pyocin S2 makes up a complex of the two (large and small) proteins. The large protein, but not the pyocin complex, shows in vitro DNase activity.

In terms of biological role, causes breakdown of chromosomal DNA as well as complete inhibition of lipid synthesis in sensitive cells. This chain is Pyocin-S2 (pys2), found in Pseudomonas aeruginosa (strain ATCC 15692 / DSM 22644 / CIP 104116 / JCM 14847 / LMG 12228 / 1C / PRS 101 / PAO1).